A 184-amino-acid chain; its full sequence is Ribosome-recycling factor (184 aa).

This sequence belongs to the RRF family.

The protein resides in the cytoplasm. Responsible for the release of ribosomes from messenger RNA at the termination of protein biosynthesis. May increase the efficiency of translation by recycling ribosomes from one round of translation to another. This is Ribosome-recycling factor from Clostridium botulinum (strain Langeland / NCTC 10281 / Type F).